A 352-amino-acid polypeptide reads, in one-letter code: Ribosomal RNA large subunit methyltransferase M (352 aa).

S-adenosyl-L-methionine is bound by residues Ser184, 217–220 (APGG), Asp236, Asp256, and Asp272. Lys301 (proton acceptor) is an active-site residue.

Belongs to the class I-like SAM-binding methyltransferase superfamily. RNA methyltransferase RlmE family. RlmM subfamily. In terms of assembly, monomer.

It is found in the cytoplasm. The catalysed reaction is cytidine(2498) in 23S rRNA + S-adenosyl-L-methionine = 2'-O-methylcytidine(2498) in 23S rRNA + S-adenosyl-L-homocysteine + H(+). Catalyzes the 2'-O-methylation at nucleotide C2498 in 23S rRNA. In Pseudomonas aeruginosa (strain LESB58), this protein is Ribosomal RNA large subunit methyltransferase M.